Reading from the N-terminus, the 350-residue chain is Arabinogalactan endo-beta-1,4-galactanase A (350 aa).

A signal peptide spans 1–17; the sequence is MILSSLLPLSLVTLTSA. Residue asparagine 129 is glycosylated (N-linked (GlcNAc...) asparagine). The Proton donor role is filled by glutamate 153. Catalysis depends on glutamate 263, which acts as the Nucleophile.

Belongs to the glycosyl hydrolase 53 family.

It localises to the secreted. It carries out the reaction The enzyme specifically hydrolyzes (1-&gt;4)-beta-D-galactosidic linkages in type I arabinogalactans.. Its function is as follows. Endogalactanase involved in the degradation of plant cell wall polysaccharides, and more particularly of hairy regions of pectin. This chain is Arabinogalactan endo-beta-1,4-galactanase A (galA), found in Emericella nidulans (strain FGSC A4 / ATCC 38163 / CBS 112.46 / NRRL 194 / M139) (Aspergillus nidulans).